Here is a 1009-residue protein sequence, read N- to C-terminus: MICAL-like protein 2 (1009 aa).

The 107-residue stretch at 1-107 (MAAIKALQEW…YVSQYYNYFH (107 aa)) folds into the Calponin-homology (CH) domain. The forms an intramolecular interaction with the C-terminal coiled coil domain keeping the protein in a closed conformation stretch occupies residues 1-260 (MAAIKALQEW…KSSNLASRKP (260 aa)). Phosphoserine occurs at positions 110, 143, and 153. Disordered stretches follow at residues 114 to 180 (GMAG…PGTA), 247 to 268 (SVSP…ADTR), 348 to 447 (NSSP…TSKV), and 655 to 834 (SPSI…TSPV). A compositionally biased stretch (polar residues) spans 144 to 171 (PAQTQRSPLSPARTNPVVQRNEGGSQRP). The LIM zinc-binding domain occupies 186 to 248 (SICGVCGKHV…THHSSEVTSV (63 aa)). S249 carries the post-translational modification Phosphoserine. Residues 261–393 (GGVTADTRPF…QGQTASKGVK (133 aa)) form a necessary and sufficient for interaction with actinins region. A mediates targeting to the cell plasma membrane region spans residues 261–805 (GGVTADTRPF…EDGTRSCKEE (545 aa)). A compositionally biased stretch (polar residues) spans 348–419 (NSSPIGWSSP…AWTSSASKTQ (72 aa)). The span at 430 to 442 (PSAPAPASAPAPA) shows a compositional bias: pro residues. Positions 694–730 (EGWRARLKPVDKKTPAGRSLEQKEPVLAEPRIGDTSR) are enriched in basic and acidic residues. Composition is skewed to low complexity over residues 731-746 (KASS…TLTS) and 755-769 (PAGS…SPSP). 2 positions are modified to phosphoserine: S766 and S768. Residues 791–817 (EPKKQEDGTRSCKEEKSPTRWSRERSA) are compositionally biased toward basic and acidic residues. The forms an intramolecular interaction with the N-terminal Calponin-homology and LIM zinc-binding domains-containing region keeping the protein in a closed conformation stretch occupies residues 806-913 (KSPTRWSRER…LMYKSKDQRL (108 aa)). S832 carries the post-translational modification Phosphoserine. In terms of domain architecture, bMERB spans 833–980 (PVRLHPDYIP…EQEEDQMLEN (148 aa)). Residues 841 to 880 (IPQEELQRQLQDIESQLDALELRGVELEKRLRAAEGDASE) are a coiled coil. A mediates interaction with RAB13 and is required for transition from the closed to the open conformation region spans residues 913–1009 (LEEQQLDLQG…WSSKSKSGQA (97 aa)).

As to quaternary structure, interacts with RAB13 (GTP-bound form); competes with RAB8A and is involved in tight junctions assembly. Interacts with RAB8A; competes with RAB13 and is involved in E-cadherin endocytic recycling. Interacts with RAB8B. Interacts (preferentially in opened conformation) with ACTN1 and ACTN4; stimulated by RAB13 activation. Interacts (via calponin-homology (CH) domain) with the filamins FLNA, FLNB and FLNC (via actin-binding domain). In terms of tissue distribution, detected in brain, lung, liver and kidney (at protein level).

It is found in the cell membrane. Its subcellular location is the cell junction. The protein resides in the tight junction. The protein localises to the recycling endosome. It localises to the cell projection. It is found in the neuron projection. Its subcellular location is the cytoplasm. The protein resides in the cytoskeleton. In terms of biological role, effector of small Rab GTPases RAB8A and RAB13 which is involved in junctional complexes assembly through the regulation of cell adhesion molecules transport to the plasma membrane and actin cytoskeleton reorganization. Regulates the endocytic recycling of occludins, claudins and E-cadherin to the plasma membrane and may thereby regulate the establishment of tight junctions and adherens junctions. In parallel, may regulate actin cytoskeleton reorganization directly through interaction with F-actin or indirectly through actinins and filamins. Undergoes liquid-liquid phase separation to form tubular recycling endosomes. Plays 2 sequential roles in the biogenesis of tubular recycling endosomes: first organizes phase separation and then the closed form formed by interaction with RAB8A promotes endosomal tubulation. This chain is MICAL-like protein 2 (Micall2), found in Mus musculus (Mouse).